Here is a 150-residue protein sequence, read N- to C-terminus: FAD synthase (150 aa).

ATP contacts are provided by residues 8-9 (AF), 13-16 (HPGH), Asp95, and His122.

Belongs to the archaeal FAD synthase family. Homodimer. The cofactor is a divalent metal cation.

It carries out the reaction FMN + ATP + H(+) = FAD + diphosphate. Its pathway is cofactor biosynthesis; FAD biosynthesis; FAD from FMN: step 1/1. Functionally, catalyzes the transfer of the AMP portion of ATP to flavin mononucleotide (FMN) to produce flavin adenine dinucleotide (FAD) coenzyme. In Methanobrevibacter ruminantium (strain ATCC 35063 / DSM 1093 / JCM 13430 / OCM 146 / M1) (Methanobacterium ruminantium), this protein is FAD synthase.